We begin with the raw amino-acid sequence, 715 residues long: Polyribonucleotide nucleotidyltransferase (715 aa).

Positions 488 and 494 each coordinate Mg(2+). The 60-residue stretch at 555 to 614 (PRIEVMHIPTDKIRDVIGTGGKVIREIVEKTGAKINIEDDGTVKIASSNGKEIEAARKWI) folds into the KH domain. An S1 motif domain is found at 624-692 (GEIYEGTVVK…ERGKVRLSMK (69 aa)).

It belongs to the polyribonucleotide nucleotidyltransferase family. The cofactor is Mg(2+).

It localises to the cytoplasm. It carries out the reaction RNA(n+1) + phosphate = RNA(n) + a ribonucleoside 5'-diphosphate. Its function is as follows. Involved in mRNA degradation. Catalyzes the phosphorolysis of single-stranded polyribonucleotides processively in the 3'- to 5'-direction. In Chelativorans sp. (strain BNC1), this protein is Polyribonucleotide nucleotidyltransferase.